We begin with the raw amino-acid sequence, 428 residues long: Chaperone SurA (428 aa).

The signal sequence occupies residues 1-13; that stretch reads MLGALLLSGAVHA. PpiC domains lie at 164–265 and 276–375; these read SEEF…KLLE and RDEV…EVLG.

It is found in the periplasm. It carries out the reaction [protein]-peptidylproline (omega=180) = [protein]-peptidylproline (omega=0). Chaperone involved in the correct folding and assembly of outer membrane proteins. Recognizes specific patterns of aromatic residues and the orientation of their side chains, which are found more frequently in integral outer membrane proteins. May act in both early periplasmic and late outer membrane-associated steps of protein maturation. In Pseudomonas savastanoi pv. phaseolicola (strain 1448A / Race 6) (Pseudomonas syringae pv. phaseolicola (strain 1448A / Race 6)), this protein is Chaperone SurA.